A 217-amino-acid chain; its full sequence is MSEHNEFDVAELRREYIRGGLRRKDLTEEPIELFERWLNQACNAKLSDPTAMSIATVDENGQPYQRIVLLKHFDSNSLIFYTNLGSRKAKHLAHNNKISLHFPWYPLERQVSFLGKAERLSPVEVVKYFHSRPRDSQIAAWASQQSSRISARGVLEGKFLELKQKFLNGEVPLPSFWGGFKVTFDSVEFWQGGANRLHDRFIYQRQGDSWHVDRLAP.

Residues 13–16 (RREY) and Lys-71 contribute to the substrate site. FMN-binding positions include 66 to 71 (RIVLLK), 81 to 82 (YT), Arg-87, Lys-88, and Gln-110. The substrate site is built by Tyr-128, Arg-132, and Ser-136. FMN contacts are provided by residues 145–146 (QS) and Trp-190. 196–198 (RLH) contributes to the substrate binding site. Residue Arg-200 participates in FMN binding.

It belongs to the pyridoxamine 5'-phosphate oxidase family. In terms of assembly, homodimer. The cofactor is FMN.

The enzyme catalyses pyridoxamine 5'-phosphate + O2 + H2O = pyridoxal 5'-phosphate + H2O2 + NH4(+). It carries out the reaction pyridoxine 5'-phosphate + O2 = pyridoxal 5'-phosphate + H2O2. It functions in the pathway cofactor metabolism; pyridoxal 5'-phosphate salvage; pyridoxal 5'-phosphate from pyridoxamine 5'-phosphate: step 1/1. Its pathway is cofactor metabolism; pyridoxal 5'-phosphate salvage; pyridoxal 5'-phosphate from pyridoxine 5'-phosphate: step 1/1. In terms of biological role, catalyzes the oxidation of either pyridoxine 5'-phosphate (PNP) or pyridoxamine 5'-phosphate (PMP) into pyridoxal 5'-phosphate (PLP). The polypeptide is Pyridoxine/pyridoxamine 5'-phosphate oxidase (Photorhabdus laumondii subsp. laumondii (strain DSM 15139 / CIP 105565 / TT01) (Photorhabdus luminescens subsp. laumondii)).